The following is a 182-amino-acid chain: ADP-ribosylation factor 1 (182 aa).

A lipid anchor (N-myristoyl glycine) is attached at Gly-2. GTP-binding positions include 24–31, 67–71, and 126–129; these read GLDNAGKT, DLGGQ, and NKQD.

The protein belongs to the small GTPase superfamily. Arf family.

It is found in the golgi apparatus. The catalysed reaction is GTP + H2O = GDP + phosphate + H(+). In terms of biological role, GTP-binding protein involved in protein trafficking; may modulate vesicle budding and uncoating within the Golgi apparatus. In Brassica rapa subsp. pekinensis (Chinese cabbage), this protein is ADP-ribosylation factor 1 (ARF1).